We begin with the raw amino-acid sequence, 160 residues long: Eosinophil cationic protein (160 aa).

The first 27 residues, 1 to 27, serve as a signal peptide directing secretion; sequence MVPKLFTSQICLLLLLGLSGVGGSLHA. The tract at residues 28–72 is required for nearly all of the bactericidal activities; partially involved in LPS-binding; that stretch reads KPRQFTRAQWFAIQHVSLNPPQCTTAMRVINNYQRRCKDQNTFLR. The active-site Proton acceptor is His-42. Disulfide bonds link Cys-50–Cys-110, Cys-64–Cys-123, Cys-82–Cys-138, and Cys-89–Cys-98. The residue at position 60 (Tyr-60) is a 3'-nitrotyrosine. 65-69 is a binding site for substrate; that stretch reads KDQNT. 4 N-linked (GlcNAc...) asparagine glycosylation sites follow: Asn-86, Asn-92, Asn-111, and Asn-119. His-155 serves as the catalytic Proton donor.

It belongs to the pancreatic ribonuclease family. Interacts with bacterial lipopolysaccharide (LPS) and lipoteichoic acid (LTA). In vitro interacts with phospholipid bilayers.

It is found in the secreted. Its function is as follows. Cytotoxin and helminthotoxin with low-efficiency ribonuclease activity. Possesses a wide variety of biological activities. Exhibits antibacterial activity. This is Eosinophil cationic protein (RNASE3) from Pongo pygmaeus (Bornean orangutan).